The following is a 328-amino-acid chain: GTPase Obg (328 aa).

The Obg domain occupies 2–160; sequence YNFKDSVSIT…LNVRLELFLV (159 aa). The OBG-type G domain occupies 161–326; sequence ADIGLVGLPN…LIKEFFVLAK (166 aa). GTP contacts are provided by residues 167-174, 192-196, 213-216, 280-283, and 307-309; these read GLPNAGKS, FTTKI, DIPG, NKLD, and SIY. Mg(2+) is bound by residues serine 174 and threonine 194.

The protein belongs to the TRAFAC class OBG-HflX-like GTPase superfamily. OBG GTPase family. As to quaternary structure, monomer. Requires Mg(2+) as cofactor.

It localises to the cytoplasm. Functionally, an essential GTPase which binds GTP, GDP and possibly (p)ppGpp with moderate affinity, with high nucleotide exchange rates and a fairly low GTP hydrolysis rate. Plays a role in control of the cell cycle, stress response, ribosome biogenesis and in those bacteria that undergo differentiation, in morphogenesis control. This Borreliella afzelii (strain PKo) (Borrelia afzelii) protein is GTPase Obg.